A 130-amino-acid polypeptide reads, in one-letter code: MADTQAKDGYYYTEKHEWVKVEGDVALIGITDFAQNALGDIVFIDLPKPGKQIKAKDSLGTIESVKAAEDLYSPISGEVVETNATLGSNPQAVNAEPFDTWMVKLKNIQTSELGGLLTAAQYKEYVSKLD.

Positions 25–106 (VALIGITDFA…PFDTWMVKLK (82 aa)) constitute a Lipoyl-binding domain. Residue Lys-66 is modified to N6-lipoyllysine.

The protein belongs to the GcvH family. The glycine cleavage system is composed of four proteins: P, T, L and H. Requires (R)-lipoate as cofactor.

Functionally, the glycine cleavage system catalyzes the degradation of glycine. The H protein shuttles the methylamine group of glycine from the P protein to the T protein. In Leptospira biflexa serovar Patoc (strain Patoc 1 / Ames), this protein is Glycine cleavage system H protein.